Reading from the N-terminus, the 287-residue chain is Large ribosomal subunit protein uL2 (287 aa).

Disordered stretches follow at residues 1-30 (MGIRNYRPYTPGTRQKSVSDFSEITHDQPE) and 211-287 (NRWK…GRQS). The span at 12-22 (GTRQKSVSDFS) shows a compositional bias: polar residues. Basic residues-rich tracts occupy residues 211 to 220 (NRWKGRRPKV) and 258 to 287 (KTRKKKKLSNALIVRRRRKSSKRGRGGRQS).

This sequence belongs to the universal ribosomal protein uL2 family. In terms of assembly, part of the 50S ribosomal subunit. Forms a bridge to the 30S subunit in the 70S ribosome.

Its function is as follows. One of the primary rRNA binding proteins. Required for association of the 30S and 50S subunits to form the 70S ribosome, for tRNA binding and peptide bond formation. It has been suggested to have peptidyltransferase activity; this is somewhat controversial. Makes several contacts with the 16S rRNA in the 70S ribosome. In Cyanothece sp. (strain PCC 7425 / ATCC 29141), this protein is Large ribosomal subunit protein uL2.